The sequence spans 704 residues: Pentatricopeptide repeat-containing protein At4g28010 (704 aa).

PPR repeat units lie at residues 71–105, 106–140, 141–175, 176–210, 211–245, 246–280, 281–315, 316–350, 351–385, 386–416, 423–453, 458–492, 493–527, 528–562, 563–597, 598–632, and 633–667; these read LAFA…DTFI, NFVS…GFAF, NVYN…SLMP, DVFS…GCSW, SLVT…GLEA, DLVV…GDSP, CAIT…GVRP, NVYT…DEEP, NAVT…RTRP, DNIT…MLKD, DVIS…LVEK, DRVT…KIVR, NSDT…ELQP, SVFD…NNFP, DVVS…GLSP, DLFT…GFEP, and DAHI…DIVL.

This sequence belongs to the PPR family. P subfamily.

This chain is Pentatricopeptide repeat-containing protein At4g28010, found in Arabidopsis thaliana (Mouse-ear cress).